The primary structure comprises 281 residues: Arabinose operon regulatory protein (281 aa).

Alpha-L-arabinopyanose-binding residues include Pro8, Thr24, Arg38, Tyr82, and His93. In terms of domain architecture, HTH araC/xylS-type spans 180 to 279 (RDACQYISDH…GASPSEFRAG (100 aa)). 2 DNA-binding regions (H-T-H motif) span residues 198–219 (ASVA…RQQL) and 246–269 (IATV…KKCT).

In terms of assembly, homodimer.

The protein localises to the cytoplasm. Functionally, transcription factor that regulates the expression of several genes involved in the transport and metabolism of L-arabinose. This chain is Arabinose operon regulatory protein, found in Salmonella typhimurium (strain LT2 / SGSC1412 / ATCC 700720).